We begin with the raw amino-acid sequence, 276 residues long: MVVKIGIIKCGNIGTSPVLDLLLDERADRPNIDVCVVGSGAKMNPDEIERAVPTMLEMERDFVIFISPNPGAPGPAKARELLSAADVPAMIIGDAPGLRVKDEIEEQGLGYIIVKADPMIGARREFLDPTEMASFNSDVIKVLAFTGAYRVVQNTIDAMIADVEAGKAPELPQVVIDTDKAVEAAGYTNPYAKAKAMAAYEIATKVADIDVRGCFMVQDPDQYIPIVASAHEMLSAAAKLAIEAREIEKANDTVLRTPHGKEGKTLSKKDLLAKPE.

Residues 253-276 (TVLRTPHGKEGKTLSKKDLLAKPE) are disordered. Basic and acidic residues predominate over residues 259–276 (HGKEGKTLSKKDLLAKPE).

This sequence belongs to the MTD family. Found to be tightly associated with methyl-coenzyme M methylreductase.

The catalysed reaction is 5,10-methylenetetrahydromethanopterin + oxidized coenzyme F420-(gamma-L-Glu)(n) + 2 H(+) = 5,10-methenyl-5,6,7,8-tetrahydromethanopterin + reduced coenzyme F420-(gamma-L-Glu)(n). It functions in the pathway one-carbon metabolism; methanogenesis from CO(2); 5,10-methylene-5,6,7,8-tetrahydromethanopterin from 5,10-methenyl-5,6,7,8-tetrahydromethanopterin (coenzyme F420 route): step 1/1. Activity requires salt; 100 mM sodium or potassium salts of chloride, phosphate or sulfate are equally effective. Not inactivated by O(2). Inhibited by hydrogen-producing 5,10-methenyltetrahydromethanopterin hydrogenase which has a higher affinity for their shared substrate. Enzyme is O(2)-stable and strictly dependent on coenzyme F420. Catalyzes the reversible reduction of methenyl-H(4)MPT(+) to methylene-H(4)MPT. The protein is F420-dependent methylenetetrahydromethanopterin dehydrogenase of Methanothermobacter marburgensis (strain ATCC BAA-927 / DSM 2133 / JCM 14651 / NBRC 100331 / OCM 82 / Marburg) (Methanobacterium thermoautotrophicum).